The primary structure comprises 331 residues: Heat-inducible transcription repressor HrcA (331 aa).

The protein belongs to the HrcA family.

Functionally, negative regulator of class I heat shock genes (grpE-dnaK-dnaJ and groELS operons). Prevents heat-shock induction of these operons. The polypeptide is Heat-inducible transcription repressor HrcA (Synechococcus sp. (strain WH7803)).